Consider the following 496-residue polypeptide: Cobyric acid synthase (496 aa).

The GATase cobBQ-type domain occupies 257-447 (KINVAIILLK…MHGILDNPAV (191 aa)). Residue cysteine 338 is the Nucleophile of the active site. Histidine 439 is a catalytic residue.

The protein belongs to the CobB/CobQ family. CobQ subfamily.

It functions in the pathway cofactor biosynthesis; adenosylcobalamin biosynthesis. Functionally, catalyzes amidations at positions B, D, E, and G on adenosylcobyrinic A,C-diamide. NH(2) groups are provided by glutamine, and one molecule of ATP is hydrogenolyzed for each amidation. This Parabacteroides distasonis (strain ATCC 8503 / DSM 20701 / CIP 104284 / JCM 5825 / NCTC 11152) protein is Cobyric acid synthase.